Consider the following 669-residue polypeptide: DNA polymerase epsilon subunit B (669 aa).

The tract at residues 96 to 115 (QISTRNGSADNLAKKAERSD) is disordered.

This sequence belongs to the DNA polymerase epsilon subunit B family. As to quaternary structure, heterotetramer. Consists of four subunits: POL2, DPB2, DPB3 and DPB4.

The protein resides in the nucleus. Its function is as follows. As accessory component of the DNA polymerase epsilon (DNA polymerase II) participates in chromosomal DNA replication. This is DNA polymerase epsilon subunit B (DPB2) from Debaryomyces hansenii (strain ATCC 36239 / CBS 767 / BCRC 21394 / JCM 1990 / NBRC 0083 / IGC 2968) (Yeast).